A 194-amino-acid chain; its full sequence is WASH complex subunit 3 (194 aa).

At Met-1 the chain carries N-acetylmethionine. Residues 46–74 are a coiled coil; sequence AVCEEKLADLSLRIQQIETTLNILDAKLS. 2 disordered regions span residues 94–126 and 158–194; these read VTNGSHSETTSEQTQQNSTQDSGAQESEAPSEN and SEGLDPELLEKPDAPVPNGESERAVEESSDSDSSFSD. A compositionally biased stretch (low complexity) spans 98-113; it reads SHSETTSEQTQQNSTQ. The span at 114 to 126 shows a compositional bias: polar residues; the sequence is DSGAQESEAPSEN.

The protein belongs to the CCDC53 family. Component of the WASH core complex also described as WASH regulatory complex (SHRC) composed of WASHC1, WASHC2, WASHC3, WASHC4 and WASHC5. The WASH core complex associates via WASHC2 with the F-actin-capping protein dimer (formed by CAPZA1, CAPZA2 or CAPZA3 and CAPZB) in a transient or substoichiometric manner which was initially described as WASH complex.

Its subcellular location is the early endosome. Acts as a component of the WASH core complex that functions as a nucleation-promoting factor (NPF) at the surface of endosomes, where it recruits and activates the Arp2/3 complex to induce actin polymerization, playing a key role in the fission of tubules that serve as transport intermediates during endosome sortingg. The sequence is that of WASH complex subunit 3 from Mus musculus (Mouse).